Consider the following 31-residue polypeptide: Photosystem II reaction center protein T (31 aa).

A helical membrane pass occupies residues 3–23 (ALVYTFLLVGTLGIIFFAIFF).

The protein belongs to the PsbT family. In terms of assembly, PSII is composed of 1 copy each of membrane proteins PsbA, PsbB, PsbC, PsbD, PsbE, PsbF, PsbH, PsbI, PsbJ, PsbK, PsbL, PsbM, PsbT, PsbY, PsbZ, Psb30/Ycf12, at least 3 peripheral proteins of the oxygen-evolving complex and a large number of cofactors. It forms dimeric complexes.

The protein localises to the plastid. The protein resides in the chloroplast thylakoid membrane. In terms of biological role, found at the monomer-monomer interface of the photosystem II (PS II) dimer, plays a role in assembly and dimerization of PSII. PSII is a light-driven water plastoquinone oxidoreductase, using light energy to abstract electrons from H(2)O, generating a proton gradient subsequently used for ATP formation. The protein is Photosystem II reaction center protein T of Mesostigma viride (Green alga).